The following is a 452-amino-acid chain: UDP-N-acetylmuramoyl-tripeptide--D-alanyl-D-alanine ligase (452 aa).

113-119 (GSNGKTT) provides a ligand contact to ATP.

This sequence belongs to the MurCDEF family. MurF subfamily.

Its subcellular location is the cytoplasm. It carries out the reaction UDP-N-acetyl-alpha-D-muramoyl-L-alanyl-gamma-D-glutamyl-L-lysine + D-alanyl-D-alanine + ATP = UDP-N-acetyl-alpha-D-muramoyl-L-alanyl-gamma-D-glutamyl-L-lysyl-D-alanyl-D-alanine + ADP + phosphate + H(+). Its pathway is cell wall biogenesis; peptidoglycan biosynthesis. Functionally, involved in cell wall formation. Catalyzes the final step in the synthesis of UDP-N-acetylmuramoyl-pentapeptide, the precursor of murein. Catalyzes the addition of D-alanyl-D-alanine to UDP-MurNAc-L-alanyl-gamma-D-glutamyl-L-lysine. In vitro, can also use the mesodiaminopimelic acid-containing form of UDP-MurNAc-tripeptide, with the same efficiency, revealing that the discrimination for the amino acid residue at the third position of the peptide in the peptidoglycans is entirely supported by MurE. This Staphylococcus aureus (strain NCTC 8325 / PS 47) protein is UDP-N-acetylmuramoyl-tripeptide--D-alanyl-D-alanine ligase.